Reading from the N-terminus, the 176-residue chain is NAD(P)H-quinone oxidoreductase subunit J (176 aa).

It belongs to the complex I 30 kDa subunit family. NDH-1 can be composed of about 15 different subunits; different subcomplexes with different compositions have been identified which probably have different functions.

The protein resides in the cellular thylakoid membrane. It carries out the reaction a plastoquinone + NADH + (n+1) H(+)(in) = a plastoquinol + NAD(+) + n H(+)(out). It catalyses the reaction a plastoquinone + NADPH + (n+1) H(+)(in) = a plastoquinol + NADP(+) + n H(+)(out). In terms of biological role, NDH-1 shuttles electrons from an unknown electron donor, via FMN and iron-sulfur (Fe-S) centers, to quinones in the respiratory and/or the photosynthetic chain. The immediate electron acceptor for the enzyme in this species is believed to be plastoquinone. Couples the redox reaction to proton translocation, and thus conserves the redox energy in a proton gradient. Cyanobacterial NDH-1 also plays a role in inorganic carbon-concentration. In Prochlorococcus marinus (strain MIT 9515), this protein is NAD(P)H-quinone oxidoreductase subunit J.